Consider the following 357-residue polypeptide: Glutamine synthetase root isozyme B (357 aa).

The GS beta-grasp domain maps to 19–99; that stretch reads IIAEYIWVGG…VICDVYTPAG (81 aa). The region spanning 106 to 357 is the GS catalytic domain; the sequence is KRYNAAKIFS…AETTILWKKS (252 aa).

Belongs to the glutamine synthetase family. As to quaternary structure, homooctamer.

The protein localises to the cytoplasm. The enzyme catalyses L-glutamate + NH4(+) + ATP = L-glutamine + ADP + phosphate + H(+). In Pisum sativum (Garden pea), this protein is Glutamine synthetase root isozyme B (GS3B).